The sequence spans 440 residues: Histidinol dehydrogenase (440 aa).

Positions 133, 194, and 217 each coordinate NAD(+). Substrate is bound by residues Ser-240, Gln-262, and His-265. Zn(2+) is bound by residues Gln-262 and His-265. Residues Glu-330 and His-331 each act as proton acceptor in the active site. Residues His-331, Asp-364, Glu-418, and His-423 each coordinate substrate. Asp-364 contacts Zn(2+). Zn(2+) is bound at residue His-423.

This sequence belongs to the histidinol dehydrogenase family. Requires Zn(2+) as cofactor.

It catalyses the reaction L-histidinol + 2 NAD(+) + H2O = L-histidine + 2 NADH + 3 H(+). Its pathway is amino-acid biosynthesis; L-histidine biosynthesis; L-histidine from 5-phospho-alpha-D-ribose 1-diphosphate: step 9/9. In terms of biological role, catalyzes the sequential NAD-dependent oxidations of L-histidinol to L-histidinaldehyde and then to L-histidine. The sequence is that of Histidinol dehydrogenase from Nitrosospira multiformis (strain ATCC 25196 / NCIMB 11849 / C 71).